The sequence spans 307 residues: Probable inactive peptidyl-prolyl cis-trans isomerase-like 6 (307 aa).

Residues 141-304 form the PPIase cyclophilin-type domain; sequence FLDISIDLYP…QNCVITASGQ (164 aa).

This sequence belongs to the cyclophilin-type PPIase family.

Its function is as follows. Probable inactive PPIase with no peptidyl-prolyl cis-trans isomerase activity. The chain is Probable inactive peptidyl-prolyl cis-trans isomerase-like 6 from Bos taurus (Bovine).